The sequence spans 392 residues: GTPase Obg (392 aa).

Positions 1–159 (MKFVDEATIK…RELRLELLLL (159 aa)) constitute an Obg domain. The 174-residue stretch at 160-333 (ADVGMLGLPN…VCNELSDFMD (174 aa)) folds into the OBG-type G domain. GTP-binding positions include 166–173 (GLPNAGKS), 191–195 (FTTLI), 213–216 (DIPG), 283–286 (NKTD), and 314–316 (AAV). Ser173 and Thr193 together coordinate Mg(2+). Residues 364 to 392 (GKNVVTEDGDDDDDWDDEEDDGHVIYARD) are disordered. Residues 370-384 (EDGDDDDDWDDEEDD) show a composition bias toward acidic residues.

This sequence belongs to the TRAFAC class OBG-HflX-like GTPase superfamily. OBG GTPase family. In terms of assembly, monomer. Mg(2+) is required as a cofactor.

Its subcellular location is the cytoplasm. An essential GTPase which binds GTP, GDP and possibly (p)ppGpp with moderate affinity, with high nucleotide exchange rates and a fairly low GTP hydrolysis rate. Plays a role in control of the cell cycle, stress response, ribosome biogenesis and in those bacteria that undergo differentiation, in morphogenesis control. The sequence is that of GTPase Obg from Aliivibrio salmonicida (strain LFI1238) (Vibrio salmonicida (strain LFI1238)).